The following is a 476-amino-acid chain: WD repeat, SAM and U-box domain-containing protein 1 (476 aa).

7 WD repeats span residues 10-47, 52-91, 95-134, 137-176, 178-227, 237-276, and 279-318; these read DHSDDVNCCAFSSSCLATCSLDKTIRIYSLNDFTELPY, GHTYAVHCCCFSPSGHTLASCSTDGATIIWDTSDGRMLAV, PTGSPVRVCRFSPESTYLVSGAADGSVVLWNVHSMKFYRS, VKDGSLVACAFSPGGNFFVTGSSCGDLTVWDDKMRCLCNE, AHDL…FLGG, GHSAPVLTCAFSYDGQMLVSGSVDKCVIIYETNTGNILHT, and QHTRYVTTCAFAPCSLFLATGSMDKTVHIWKLDNKQPCAG. The region spanning 333–396 is the SAM domain; that stretch reads WSEDDVSAWL…LQKIEELRMK (64 aa). The U-box domain occupies 403-476; that stretch reads AVPDEFLCPI…ISRWLETQQK (74 aa).

The sequence is that of WD repeat, SAM and U-box domain-containing protein 1 (WDSUB1) from Gallus gallus (Chicken).